Here is a 105-residue protein sequence, read N- to C-terminus: ATP synthase subunit c (105 aa).

The next 3 helical transmembrane spans lie at 3–23 (FLSL…GGMG), 32–52 (SILG…IGMG), and 78–98 (VAMA…IIAI).

This sequence belongs to the ATPase C chain family. F-type ATPases have 2 components, F(1) - the catalytic core - and F(0) - the membrane proton channel. F(1) has five subunits: alpha(3), beta(3), gamma(1), delta(1), epsilon(1). F(0) has three main subunits: a(1), b(2) and c(10-14). The alpha and beta chains form an alternating ring which encloses part of the gamma chain. F(1) is attached to F(0) by a central stalk formed by the gamma and epsilon chains, while a peripheral stalk is formed by the delta and b chains.

The protein resides in the cell inner membrane. In terms of biological role, f(1)F(0) ATP synthase produces ATP from ADP in the presence of a proton or sodium gradient. F-type ATPases consist of two structural domains, F(1) containing the extramembraneous catalytic core and F(0) containing the membrane proton channel, linked together by a central stalk and a peripheral stalk. During catalysis, ATP synthesis in the catalytic domain of F(1) is coupled via a rotary mechanism of the central stalk subunits to proton translocation. Functionally, key component of the F(0) channel; it plays a direct role in translocation across the membrane. A homomeric c-ring of between 10-14 subunits forms the central stalk rotor element with the F(1) delta and epsilon subunits. The polypeptide is ATP synthase subunit c (Helicobacter pylori (strain Shi470)).